The following is a 272-amino-acid chain: 3-methyl-2-oxobutanoate hydroxymethyltransferase (272 aa).

Mg(2+)-binding residues include D54 and D93. 3-methyl-2-oxobutanoate contacts are provided by residues 54-55 (DS), D93, and K121. E123 serves as a coordination point for Mg(2+). Catalysis depends on E190, which acts as the Proton acceptor.

Belongs to the PanB family. As to quaternary structure, homodecamer; pentamer of dimers. It depends on Mg(2+) as a cofactor.

The protein localises to the cytoplasm. It carries out the reaction 3-methyl-2-oxobutanoate + (6R)-5,10-methylene-5,6,7,8-tetrahydrofolate + H2O = 2-dehydropantoate + (6S)-5,6,7,8-tetrahydrofolate. It functions in the pathway cofactor biosynthesis; (R)-pantothenate biosynthesis; (R)-pantoate from 3-methyl-2-oxobutanoate: step 1/2. In terms of biological role, catalyzes the reversible reaction in which hydroxymethyl group from 5,10-methylenetetrahydrofolate is transferred onto alpha-ketoisovalerate to form ketopantoate. The chain is 3-methyl-2-oxobutanoate hydroxymethyltransferase from Janthinobacterium sp. (strain Marseille) (Minibacterium massiliensis).